The chain runs to 251 residues: NADH-quinone oxidoreductase subunit C (251 aa).

Residues 1 to 34 (MSDANNTAGDANEVNPEKDLSAENLPGQRGQGGE) form a disordered region.

This sequence belongs to the complex I 30 kDa subunit family. As to quaternary structure, NDH-1 is composed of 14 different subunits. Subunits NuoB, C, D, E, F, and G constitute the peripheral sector of the complex.

It is found in the cell membrane. It carries out the reaction a quinone + NADH + 5 H(+)(in) = a quinol + NAD(+) + 4 H(+)(out). Its function is as follows. NDH-1 shuttles electrons from NADH, via FMN and iron-sulfur (Fe-S) centers, to quinones in the respiratory chain. The immediate electron acceptor for the enzyme in this species is believed to be a menaquinone. Couples the redox reaction to proton translocation (for every two electrons transferred, four hydrogen ions are translocated across the cytoplasmic membrane), and thus conserves the redox energy in a proton gradient. This Streptomyces coelicolor (strain ATCC BAA-471 / A3(2) / M145) protein is NADH-quinone oxidoreductase subunit C.